The sequence spans 601 residues: Proline--tRNA ligase (601 aa).

This sequence belongs to the class-II aminoacyl-tRNA synthetase family. ProS type 1 subfamily. Homodimer.

It is found in the cytoplasm. The catalysed reaction is tRNA(Pro) + L-proline + ATP = L-prolyl-tRNA(Pro) + AMP + diphosphate. Catalyzes the attachment of proline to tRNA(Pro) in a two-step reaction: proline is first activated by ATP to form Pro-AMP and then transferred to the acceptor end of tRNA(Pro). As ProRS can inadvertently accommodate and process non-cognate amino acids such as alanine and cysteine, to avoid such errors it has two additional distinct editing activities against alanine. One activity is designated as 'pretransfer' editing and involves the tRNA(Pro)-independent hydrolysis of activated Ala-AMP. The other activity is designated 'posttransfer' editing and involves deacylation of mischarged Ala-tRNA(Pro). The misacylated Cys-tRNA(Pro) is not edited by ProRS. In Picosynechococcus sp. (strain ATCC 27264 / PCC 7002 / PR-6) (Agmenellum quadruplicatum), this protein is Proline--tRNA ligase.